We begin with the raw amino-acid sequence, 369 residues long: Anhydro-N-acetylmuramic acid kinase (369 aa).

12–19 (GTSLDGVD) is a binding site for ATP.

Belongs to the anhydro-N-acetylmuramic acid kinase family.

It carries out the reaction 1,6-anhydro-N-acetyl-beta-muramate + ATP + H2O = N-acetyl-D-muramate 6-phosphate + ADP + H(+). It participates in amino-sugar metabolism; 1,6-anhydro-N-acetylmuramate degradation. The protein operates within cell wall biogenesis; peptidoglycan recycling. Its function is as follows. Catalyzes the specific phosphorylation of 1,6-anhydro-N-acetylmuramic acid (anhMurNAc) with the simultaneous cleavage of the 1,6-anhydro ring, generating MurNAc-6-P. Is required for the utilization of anhMurNAc either imported from the medium or derived from its own cell wall murein, and thus plays a role in cell wall recycling. The sequence is that of Anhydro-N-acetylmuramic acid kinase from Escherichia coli (strain SMS-3-5 / SECEC).